The sequence spans 317 residues: Transaldolase (317 aa).

The active-site Schiff-base intermediate with substrate is lysine 132.

It belongs to the transaldolase family. Type 1 subfamily. In terms of assembly, homodimer.

Its subcellular location is the cytoplasm. The enzyme catalyses D-sedoheptulose 7-phosphate + D-glyceraldehyde 3-phosphate = D-erythrose 4-phosphate + beta-D-fructose 6-phosphate. The protein operates within carbohydrate degradation; pentose phosphate pathway; D-glyceraldehyde 3-phosphate and beta-D-fructose 6-phosphate from D-ribose 5-phosphate and D-xylulose 5-phosphate (non-oxidative stage): step 2/3. Its function is as follows. Transaldolase is important for the balance of metabolites in the pentose-phosphate pathway. The chain is Transaldolase from Pseudoalteromonas atlantica (strain T6c / ATCC BAA-1087).